We begin with the raw amino-acid sequence, 98 residues long: NADH-ubiquinone oxidoreductase chain 4L (98 aa).

The next 3 membrane-spanning stretches (helical) occupy residues 2-22, 29-49, and 61-81; these read SLVY…LLMF, SLLC…ILIL, and IIML…LVMV.

The protein belongs to the complex I subunit 4L family. Core subunit of respiratory chain NADH dehydrogenase (Complex I) which is composed of 45 different subunits.

It localises to the mitochondrion inner membrane. The catalysed reaction is a ubiquinone + NADH + 5 H(+)(in) = a ubiquinol + NAD(+) + 4 H(+)(out). In terms of biological role, core subunit of the mitochondrial membrane respiratory chain NADH dehydrogenase (Complex I) which catalyzes electron transfer from NADH through the respiratory chain, using ubiquinone as an electron acceptor. Part of the enzyme membrane arm which is embedded in the lipid bilayer and involved in proton translocation. This chain is NADH-ubiquinone oxidoreductase chain 4L (MT-ND4L), found in Galemys pyrenaicus (Iberian desman).